A 267-amino-acid polypeptide reads, in one-letter code: Cell division protein FtsQ (267 aa).

At 1–32 (MRKKTSSNKKNTAKKNNNISLHRKLGLIYKKT) the chain is on the cytoplasmic side. A helical transmembrane segment spans residues 33–53 (ILILKIVLIIFICLFAFTKYF). The Periplasmic segment spans residues 54–267 (ASLKSYLKTN…DKNKYYIEKY (214 aa)). The POTRA domain maps to 73–141 (FKLENVIIEG…STIYIKLFER (69 aa)).

It belongs to the FtsQ/DivIB family. FtsQ subfamily.

It is found in the cell inner membrane. Its function is as follows. Essential cell division protein. In Rickettsia bellii (strain RML369-C), this protein is Cell division protein FtsQ.